We begin with the raw amino-acid sequence, 157 residues long: Protein-export protein SecB (157 aa).

The protein belongs to the SecB family. In terms of assembly, homotetramer, a dimer of dimers. One homotetramer interacts with 1 SecA dimer.

The protein localises to the cytoplasm. Its function is as follows. One of the proteins required for the normal export of preproteins out of the cell cytoplasm. It is a molecular chaperone that binds to a subset of precursor proteins, maintaining them in a translocation-competent state. It also specifically binds to its receptor SecA. This chain is Protein-export protein SecB, found in Tolumonas auensis (strain DSM 9187 / NBRC 110442 / TA 4).